The sequence spans 361 residues: 3-dehydroquinate synthase (361 aa).

The protein belongs to the archaeal-type DHQ synthase family.

The catalysed reaction is 2-amino-2,3,7-trideoxy-D-lyxo-hept-6-ulosonate + NAD(+) + H2O = 3-dehydroquinate + NH4(+) + NADH + H(+). Its function is as follows. Catalyzes the oxidative deamination and cyclization of 2-amino-3,7-dideoxy-D-threo-hept-6-ulosonic acid (ADH) to yield 3-dehydroquinate (DHQ), which is fed into the canonical shikimic pathway of aromatic amino acid biosynthesis. This is 3-dehydroquinate synthase from Methanococcus vannielii (strain ATCC 35089 / DSM 1224 / JCM 13029 / OCM 148 / SB).